Consider the following 106-residue polypeptide: Large ribosomal subunit protein uL23 (106 aa).

This sequence belongs to the universal ribosomal protein uL23 family. As to quaternary structure, part of the 50S ribosomal subunit. Contacts protein L29, and trigger factor when it is bound to the ribosome.

Functionally, one of the early assembly proteins it binds 23S rRNA. One of the proteins that surrounds the polypeptide exit tunnel on the outside of the ribosome. Forms the main docking site for trigger factor binding to the ribosome. The chain is Large ribosomal subunit protein uL23 from Neisseria meningitidis serogroup A / serotype 4A (strain DSM 15465 / Z2491).